The chain runs to 358 residues: Cilia- and flagella-associated protein 263 (358 aa).

Coiled coils occupy residues 93–138 (YKKM…FKRN), 176–200 (RKNSALLTHKKKQQAQLRQQEEMAE), and 266–343 (RTKL…YTKS).

The protein belongs to the CFAP263 family. As to quaternary structure, forms a complex with CFAP184; the interaction is required for functional activity in cilia. Interacts with HAP1 and PCM1.

Its subcellular location is the cytoplasm. It is found in the cytoskeleton. The protein resides in the microtubule organizing center. The protein localises to the centrosome. It localises to the centriolar satellite. Its subcellular location is the cell projection. It is found in the cilium. Component of centriolar satellites contributing to primary cilium formation. In complex with CFAP263, acts as a regulator of ciliary beating that connects radial spoke 3 (RS3) to the inner dynein arm (IDA) and the nexin-dynein regulatory complex (N-DRC). The complex is positioned parallel to N-DRC and forms a connection between the arch at the base of RS3, the IDA tail and N-DRC. This is Cilia- and flagella-associated protein 263 (cfap263) from Danio rerio (Zebrafish).